Consider the following 198-residue polypeptide: 3-isopropylmalate dehydratase small subunit (198 aa).

Belongs to the LeuD family. LeuD type 1 subfamily. In terms of assembly, heterodimer of LeuC and LeuD.

It catalyses the reaction (2R,3S)-3-isopropylmalate = (2S)-2-isopropylmalate. It functions in the pathway amino-acid biosynthesis; L-leucine biosynthesis; L-leucine from 3-methyl-2-oxobutanoate: step 2/4. Its function is as follows. Catalyzes the isomerization between 2-isopropylmalate and 3-isopropylmalate, via the formation of 2-isopropylmaleate. This chain is 3-isopropylmalate dehydratase small subunit, found in Mycobacterium leprae (strain Br4923).